A 101-amino-acid chain; its full sequence is uncharacterized protein (101 aa).

Positions 1-23 (MERRTGVVLIIFVTFCEAMMARA) are cleaved as a signal peptide. A helical transmembrane segment spans residues 38 to 58 (FLLFIIHTSCTMVAFIIGNLA).

Its subcellular location is the host membrane. This is an uncharacterized protein from Cryphonectria parasitica (Chestnut blight fungus).